We begin with the raw amino-acid sequence, 140 residues long: MAIHYETKATNVGGRKGHVYTDDRALDIDIVPPAQADGKATNPEQLFAAGYASCFNGAFDLILKQNKVRDAHPEVTLTVRLEDDPDSESPKLSVSIDATIKNVISQEEAEKYLQMAHEFCPYSKATQGNINVDLNVNVVD.

This sequence belongs to the OsmC/Ohr family.

In Staphylococcus aureus (strain MRSA252), this protein is Organic hydroperoxide resistance protein-like.